A 345-amino-acid polypeptide reads, in one-letter code: Probable G-protein coupled receptor 139 (345 aa).

The Extracellular portion of the chain corresponds to 1 to 21; that stretch reads MEHTHAHLAANSSACGLGFVP. A glycan (N-linked (GlcNAc...) asparagine) is linked at Asn11. Residues 22-42 traverse the membrane as a helical segment; the sequence is VVYYSFLLCLGLPANILTVII. The Cytoplasmic segment spans residues 43 to 57; sequence LSQLVARRQKSSYNY. The chain crosses the membrane as a helical span at residues 58–78; the sequence is LLALAAADILVLFFIVFVDFL. Over 79–94 the chain is Extracellular; it reads LEDFILTMQMPLIPDK. The helical transmembrane segment at 95 to 115 threads the bilayer; sequence IIEVLEFSSIHTSIWITVPLT. At 116-140 the chain is on the cytoplasmic side; sequence VDRYIAVCHPLKYHTVSYPARTRKV. Residues 141–161 traverse the membrane as a helical segment; that stretch reads ILSVYITCFLTSIPYYWWPNI. Topologically, residues 162 to 173 are extracellular; the sequence is WTEDYISTSMHH. Residues 174–194 traverse the membrane as a helical segment; it reads VLVWIHCFTVYLVPCSIFFIL. Residues 195–220 are Cytoplasmic-facing; the sequence is NSIIVYKLRRKSNFRLRGYSTGKTTA. A helical transmembrane segment spans residues 221 to 241; sequence ILFTITSIFATLWAPRIIMIL. At 242-260 the chain is on the extracellular side; that stretch reads YHLYGAPIQNPWLVHIMLD. Residues 261–281 traverse the membrane as a helical segment; it reads VANMLALLNTAINFFLYCFIS. Residues 282–345 lie on the Cytoplasmic side of the membrane; the sequence is KRFRTMAAAT…KHGKPIKVSP (64 aa).

The protein belongs to the G-protein coupled receptor 1 family. In terms of tissue distribution, expressed almost exclusively in the brain. Abundantly expressed in the ventrolateral region of caudate putamen, the habenular nucleus, the zona incerta, and the medial mammillary nucleus.

Its subcellular location is the cell membrane. Its function is as follows. Orphan receptor. Seems to act through a G(q/11)-mediated pathway. The chain is Probable G-protein coupled receptor 139 (Gpr139) from Mus musculus (Mouse).